A 388-amino-acid polypeptide reads, in one-letter code: Alanine racemase (388 aa).

Catalysis depends on Lys-44, which acts as the Proton acceptor; specific for D-alanine. Lys-44 carries the post-translational modification N6-(pyridoxal phosphate)lysine. Residue Arg-142 participates in substrate binding. Tyr-273 functions as the Proton acceptor; specific for L-alanine in the catalytic mechanism. Position 321 (Met-321) interacts with substrate.

It belongs to the alanine racemase family. Pyridoxal 5'-phosphate serves as cofactor.

It carries out the reaction L-alanine = D-alanine. Its pathway is amino-acid biosynthesis; D-alanine biosynthesis; D-alanine from L-alanine: step 1/1. In terms of biological role, catalyzes the interconversion of L-alanine and D-alanine. May also act on other amino acids. The polypeptide is Alanine racemase (alr) (Mycobacterium ulcerans (strain Agy99)).